Consider the following 313-residue polypeptide: tRNA-cytidine(32) 2-sulfurtransferase (313 aa).

Positions 60-65 (SGGKDS) match the PP-loop motif motif. [4Fe-4S] cluster-binding residues include Cys135, Cys138, and Cys226.

The protein belongs to the TtcA family. In terms of assembly, homodimer. Requires Mg(2+) as cofactor. [4Fe-4S] cluster is required as a cofactor.

It is found in the cytoplasm. It carries out the reaction cytidine(32) in tRNA + S-sulfanyl-L-cysteinyl-[cysteine desulfurase] + AH2 + ATP = 2-thiocytidine(32) in tRNA + L-cysteinyl-[cysteine desulfurase] + A + AMP + diphosphate + H(+). Its pathway is tRNA modification. Catalyzes the ATP-dependent 2-thiolation of cytidine in position 32 of tRNA, to form 2-thiocytidine (s(2)C32). The sulfur atoms are provided by the cysteine/cysteine desulfurase (IscS) system. This is tRNA-cytidine(32) 2-sulfurtransferase from Delftia acidovorans (strain DSM 14801 / SPH-1).